The primary structure comprises 329 residues: Mas-related G-protein coupled receptor member X2 (329 aa).

Residues 1–33 lie on the Extracellular side of the membrane; sequence MDPTTPAWGTESTTMNGNDQALPLFCGKETLIS. The helical transmembrane segment at 34-54 threads the bilayer; the sequence is VFLILFIALVGLVGNGFVLWL. Residues 55–63 are Cytoplasmic-facing; the sequence is LGFRMRKNA. A helical membrane pass occupies residues 64-84; it reads FSVYVLSLAGADFLFLCFQII. Topologically, residues 85 to 96 are extracellular; that stretch reads NCLVYLSNVFCS. A helical transmembrane segment spans residues 97 to 117; that stretch reads ISINFPSFFITVMTCAYLAGL. Residues 118-144 lie on the Cytoplasmic side of the membrane; the sequence is SMLSTISTERCLSVLWPIWYRCRRPRH. The chain crosses the membrane as a helical span at residues 145–165; that stretch reads LSAVACVLLWALSLLLSILEG. The Extracellular portion of the chain corresponds to 166–183; that stretch reads KFCGLFGDGDSGWCQTFD. A helical transmembrane segment spans residues 184–204; that stretch reads LITAAWLIFLFMVLCGSSLAL. Topologically, residues 205–227 are cytoplasmic; that stretch reads LVRILCGSRGLPLTRLYLTILLT. Residues 228 to 248 form a helical membrane-spanning segment; the sequence is VLVFLLCGLPFGIQWFLILWI. Residues 249–263 lie on the Extracellular side of the membrane; that stretch reads WKNSDVLFCHIHPVS. A helical membrane pass occupies residues 264–284; the sequence is VVLSSLNSSANPIIYFFVGSF. At 285–329 the chain is on the cytoplasmic side; the sequence is RKQWRLQQPILKLALQRALQDIAEVDHSEGCFRQGTPEMSRSSLV.

Belongs to the G-protein coupled receptor 1 family. Mas subfamily.

The protein localises to the cell membrane. In terms of biological role, mast cell-specific receptor for basic secretagogues, i.e. cationic amphiphilic drugs, as well as endo- or exogenous peptides, consisting of a basic head group and a hydrophobic core. Recognizes and binds small molecules containing a cyclized tetrahydroisoquinoline (THIQ), such as non-steroidal neuromuscular blocking drugs (NMBDs), including tubocurarine and atracurium. In response to these compounds, mediates pseudo-allergic reactions characterized by histamine release, inflammation and airway contraction. The chain is Mas-related G-protein coupled receptor member X2 (MRGPRX2) from Pan troglodytes (Chimpanzee).